A 145-amino-acid polypeptide reads, in one-letter code: Brain and acute leukemia cytoplasmic protein (145 aa).

Residue glycine 2 is the site of N-myristoyl glycine attachment. Cysteine 3 carries S-palmitoyl cysteine lipidation. The tract at residues 3 to 35 (CGGSRADAIEPRYYESWTRETESTWLTYTDSDA) is interaction with CAMK2A. Disordered stretches follow at residues 36–56 (LPSAAATDSGPEAGGLHAGVL) and 87–109 (CPNSQNLSSGPLTQKQNGLWATE). Positions 87-105 (CPNSQNLSSGPLTQKQNGL) are enriched in polar residues.

As to quaternary structure, interacts with CAMK2A. In terms of processing, palmitoylation and myristoylation target the protein to the lipid rafts. As to expression, at the mRNA level, predominantly expressed in the brain. At the protein level, mainly expressed in muscle tissues. In skeletal muscles, expressed in cranial and facial muscles, muscles of the neck, back, thoracic wall, and thigh. Also found in the contractile myoepithelial cell layer of salivary glands. In smooth muscles, expressed in the gastric wall, uterus, urinary bladder, as well as in the muscular lining around seminiferous tubules, prostatic ducts, epididymis, vas deferens, walls of small blood vessels in the dermis, and fascial layers between muscle fibers, brain, and around the spinal cord. Strongly expressed in myocardium. High expression levels are observed in placental spongiotrophoblast and adjacent myometrium. Also expressed in bone marrow hematopoietic cells. In the mature thymus, expressed in rare scattered cells. Weakly expressed in the brain neuropil, particularly near the hippocampus, and spinal cord white matter. Not detected in skin keratinocytes or lung (at protein level).

The protein localises to the cytoplasm. Its subcellular location is the synapse. It localises to the synaptosome. The protein resides in the membrane raft. It is found in the postsynaptic density. In terms of biological role, may play a synaptic role at the postsynaptic lipid rafts possibly through interaction with CAMK2A. In Mus musculus (Mouse), this protein is Brain and acute leukemia cytoplasmic protein (Baalc).